The following is a 521-amino-acid chain: Leucine-rich repeat-containing protein 24 (521 aa).

The N-terminal stretch at 1–23 is a signal peptide; sequence MALRAPTLLLLLLGLLLLPLLPG. The LRRNT domain occupies 24–58; that stretch reads LPPRATGCPAACRCYSATVECGALRLRVVPPGIPP. LRR repeat units follow at residues 59-80, 83-104, 107-128, 131-152, 155-176, and 179-200; these read GTQT…SLAP, ALRH…AFRA, RLLE…AFVG, QLRV…TFLH, RLQE…ALAG, and SLAL…ALQP. The N-linked (GlcNAc...) asparagine glycan is linked to Asn-91. The region spanning 212-267 is the LRRCT domain; the sequence is NPWRCDCALHWLGSWIKEGGRRLLSSRDKKITCAEPPRLALQSLLEVSGGSLICIP. The 104-residue stretch at 268 to 371 folds into the Ig-like C2-type domain; it reads PSVNVEPPEF…ARVPFHLLVN (104 aa). Cys-289 and Cys-353 are joined by a disulfide. Positions 306–330 are disordered; sequence QPRDGKPQAQAQLEGGAPGLGGHGT. 2 N-linked (GlcNAc...) asparagine glycosylation sites follow: Asn-342 and Asn-371. The interval 374-395 is disordered; it reads RQQSQQLPDPQAPATRPVGHEP. The chain crosses the membrane as a helical span at residues 414–434; sequence AITAAIALLALTALLLAAMIC.

It is found in the membrane. The chain is Leucine-rich repeat-containing protein 24 (Lrrc24) from Mus musculus (Mouse).